The following is a 270-amino-acid chain: Calpain small subunit 1 (270 aa).

Met1 carries the N-acetylmethionine modification. A Phosphoserine modification is found at Ser6. Residues 98 to 132 (EEERQFRKLFVQLAGDDMEVSATELMNILNKVVTR) enclose the EF-hand 1; atypical domain. Ala111, Asp114, Glu116, Glu121, Asp139, Asp154, Asp156, Thr158, Lys160, and Glu165 together coordinate Ca(2+). EF-hand domains lie at 141–174 (FGID…NNIK), 171–206 (NNIK…AGFH), 207–235 (LNQH…ISCL), and 236–270 (VRLD…TMYS). Lys181 carries the post-translational modification N6-acetyllysine. Asp184, Asp186, Ser188, Thr190, Glu195, and Asp227 together coordinate Ca(2+).

In terms of assembly, homodimer or heterodimer of a large (catalytic) and a small (regulatory) subunit. In presence of calcium, the heterodimer dissociates.

The protein resides in the cytoplasm. Its subcellular location is the cell membrane. Its function is as follows. Regulatory subunit of the calcium-regulated non-lysosomal thiol-protease which catalyzes limited proteolysis of substrates involved in cytoskeletal remodeling and signal transduction. Essential for embryonic development. The protein is Calpain small subunit 1 (Capns1) of Rattus norvegicus (Rat).